The following is an 88-amino-acid chain: Small ribosomal subunit protein uS17 (88 aa).

The protein belongs to the universal ribosomal protein uS17 family. As to quaternary structure, part of the 30S ribosomal subunit.

Functionally, one of the primary rRNA binding proteins, it binds specifically to the 5'-end of 16S ribosomal RNA. In Vesicomyosocius okutanii subsp. Calyptogena okutanii (strain HA), this protein is Small ribosomal subunit protein uS17.